Consider the following 320-residue polypeptide: 3-O-acetylpapaveroxine carboxylesterase CXE1 (320 aa).

The Involved in the stabilization of the negatively charged intermediate by the formation of the oxyanion hole motif lies at 72–74 (HGG). Residues Ser158, Asp262, and His292 contribute to the active site.

It belongs to the 'GDXG' lipolytic enzyme family.

It carries out the reaction 3-O-acetylpapaveroxine + H2O = narcotine hemiacetal + acetate + H(+). The protein operates within alkaloid biosynthesis. In terms of biological role, carboxylesterase involved in the biosynthesis of the benzylisoquinoline alkaloid noscapine. Converts 3-O-acetylpapaveroxine to papaveroxine which spontaneously rearranges to narcotine hemiacetal. The polypeptide is 3-O-acetylpapaveroxine carboxylesterase CXE1 (Papaver somniferum (Opium poppy)).